The following is a 242-amino-acid chain: Required for respiratory growth protein 7, mitochondrial (242 aa).

It belongs to the RRG7 family.

It localises to the mitochondrion. In Saccharomyces cerevisiae (strain ATCC 204508 / S288c) (Baker's yeast), this protein is Required for respiratory growth protein 7, mitochondrial (RRG7).